The chain runs to 125 residues: Small ribosomal subunit protein uS12c (125 aa).

It belongs to the universal ribosomal protein uS12 family. As to quaternary structure, part of the 30S ribosomal subunit.

Its subcellular location is the plastid. The protein localises to the chloroplast. Its function is as follows. With S4 and S5 plays an important role in translational accuracy. Located at the interface of the 30S and 50S subunits. The polypeptide is Small ribosomal subunit protein uS12c (rps12) (Tupiella akineta (Green alga)).